The primary structure comprises 459 residues: Cysteine--tRNA ligase (459 aa).

Residue cysteine 27 participates in Zn(2+) binding. A 'HIGH' region motif is present at residues 29–39 (PTVYDDAHLGH). Zn(2+) contacts are provided by cysteine 202, histidine 231, and glutamate 235. The 'KMSKS' region signature appears at 263-267 (KMSKS). Lysine 266 contacts ATP.

This sequence belongs to the class-I aminoacyl-tRNA synthetase family. In terms of assembly, monomer. Zn(2+) is required as a cofactor.

It is found in the cytoplasm. It carries out the reaction tRNA(Cys) + L-cysteine + ATP = L-cysteinyl-tRNA(Cys) + AMP + diphosphate. This chain is Cysteine--tRNA ligase, found in Campylobacter fetus subsp. fetus (strain 82-40).